The chain runs to 174 residues: Protein-export protein SecB (174 aa).

It belongs to the SecB family. As to quaternary structure, homotetramer, a dimer of dimers. One homotetramer interacts with 1 SecA dimer.

The protein localises to the cytoplasm. One of the proteins required for the normal export of preproteins out of the cell cytoplasm. It is a molecular chaperone that binds to a subset of precursor proteins, maintaining them in a translocation-competent state. It also specifically binds to its receptor SecA. The polypeptide is Protein-export protein SecB (Ehrlichia ruminantium (strain Gardel)).